A 222-amino-acid chain; its full sequence is Histidinol-phosphatase (222 aa).

The Nucleophile role is filled by Asp-8. Mg(2+)-binding residues include Asp-8, Asp-10, and Asp-184. Asp-10 serves as the catalytic Proton donor.

The protein belongs to the HAD-like hydrolase superfamily. SerB family. Mg(2+) is required as a cofactor.

It catalyses the reaction L-histidinol phosphate + H2O = L-histidinol + phosphate. It functions in the pathway amino-acid biosynthesis; L-histidine biosynthesis; L-histidine from 5-phospho-alpha-D-ribose 1-diphosphate: step 8/9. Functionally, catalyzes the dephosphorylation of histidinol-phosphate to histidinol, the direct precursor of histidine. The chain is Histidinol-phosphatase from Neisseria meningitidis serogroup C (strain 8013).